The following is a 257-amino-acid chain: 3-dehydroquinate dehydratase (257 aa).

3-dehydroquinate-binding positions include Glu-50 to Arg-52 and Arg-86. His-147 functions as the Proton donor/acceptor in the catalytic mechanism. Catalysis depends on Lys-174, which acts as the Schiff-base intermediate with substrate. Residues Arg-216, Ser-235, and Gln-239 each contribute to the 3-dehydroquinate site.

Belongs to the type-I 3-dehydroquinase family. As to quaternary structure, homodimer.

It catalyses the reaction 3-dehydroquinate = 3-dehydroshikimate + H2O. Its pathway is metabolic intermediate biosynthesis; chorismate biosynthesis; chorismate from D-erythrose 4-phosphate and phosphoenolpyruvate: step 3/7. Involved in the third step of the chorismate pathway, which leads to the biosynthesis of aromatic amino acids. Catalyzes the cis-dehydration of 3-dehydroquinate (DHQ) and introduces the first double bond of the aromatic ring to yield 3-dehydroshikimate. This chain is 3-dehydroquinate dehydratase, found in Geobacillus thermodenitrificans (strain NG80-2).